A 416-amino-acid chain; its full sequence is Phosphoglycerate kinase 2 (416 aa).

Substrate contacts are provided by residues 28 to 30 (DMN), arginine 44, 65 to 68 (HQSR), arginine 122, and arginine 162. ATP contacts are provided by residues glutamate 337 and 362-365 (GGHI).

Belongs to the phosphoglycerate kinase family. Monomer.

Its subcellular location is the cytoplasm. It catalyses the reaction (2R)-3-phosphoglycerate + ATP = (2R)-3-phospho-glyceroyl phosphate + ADP. The protein operates within carbohydrate degradation; glycolysis; pyruvate from D-glyceraldehyde 3-phosphate: step 2/5. The polypeptide is Phosphoglycerate kinase 2 (Methanosarcina acetivorans (strain ATCC 35395 / DSM 2834 / JCM 12185 / C2A)).